Here is a 1083-residue protein sequence, read N- to C-terminus: DNA-directed RNA polymerase subunit beta (1083 aa).

Belongs to the RNA polymerase beta chain family. In terms of assembly, in plastids the minimal PEP RNA polymerase catalytic core is composed of four subunits: alpha, beta, beta', and beta''. When a (nuclear-encoded) sigma factor is associated with the core the holoenzyme is formed, which can initiate transcription.

It localises to the plastid. The protein localises to the chloroplast. The catalysed reaction is RNA(n) + a ribonucleoside 5'-triphosphate = RNA(n+1) + diphosphate. Functionally, DNA-dependent RNA polymerase catalyzes the transcription of DNA into RNA using the four ribonucleoside triphosphates as substrates. In Acorus calamus var. americanus (American sweet flag), this protein is DNA-directed RNA polymerase subunit beta.